The primary structure comprises 128 residues: uncharacterized protein (128 aa).

This is an uncharacterized protein from Frog virus 3 (isolate Goorha) (FV-3).